Consider the following 686-residue polypeptide: Potassium-transporting ATPase ATP-binding subunit 2 (686 aa).

Transmembrane regions (helical) follow at residues 37–57 (MFVV…PNLF), 64–84 (MILY…FANF), 223–243 (LLVS…PMAI), and 255–275 (VALT…AIGI). Catalysis depends on Asp-306, which acts as the 4-aspartylphosphate intermediate. Residues Asp-343, Glu-347, 376–383 (FTAQTRMS), and Lys-395 contribute to the ATP site. The Mg(2+) site is built by Asp-518 and Asp-522. A run of 3 helical transmembrane segments spans residues 588-608 (FAII…LNIM), 616-636 (AILS…PLAM), and 656-676 (VYGV…DLVI).

The protein belongs to the cation transport ATPase (P-type) (TC 3.A.3) family. Type IA subfamily. The system is composed of three essential subunits: KdpA, KdpB and KdpC.

Its subcellular location is the cell membrane. It catalyses the reaction K(+)(out) + ATP + H2O = K(+)(in) + ADP + phosphate + H(+). Part of the high-affinity ATP-driven potassium transport (or Kdp) system, which catalyzes the hydrolysis of ATP coupled with the electrogenic transport of potassium into the cytoplasm. This subunit is responsible for energy coupling to the transport system and for the release of the potassium ions to the cytoplasm. This chain is Potassium-transporting ATPase ATP-binding subunit 2, found in Listeria innocua serovar 6a (strain ATCC BAA-680 / CLIP 11262).